Here is a 51-residue protein sequence, read N- to C-terminus: Large ribosomal subunit protein eL39 (51 aa).

Belongs to the eukaryotic ribosomal protein eL39 family.

The polypeptide is Large ribosomal subunit protein eL39 (rpl39e) (Methanocaldococcus jannaschii (strain ATCC 43067 / DSM 2661 / JAL-1 / JCM 10045 / NBRC 100440) (Methanococcus jannaschii)).